We begin with the raw amino-acid sequence, 234 residues long: Adenosine 5'-phosphosulfate reductase (234 aa).

Cys-120, Cys-121, Cys-203, and Cys-206 together coordinate [4Fe-4S] cluster. Cys-229 (nucleophile; cysteine thiosulfonate intermediate) is an active-site residue.

This sequence belongs to the PAPS reductase family. CysH subfamily. [4Fe-4S] cluster serves as cofactor.

The protein resides in the cytoplasm. The catalysed reaction is [thioredoxin]-disulfide + sulfite + AMP + 2 H(+) = adenosine 5'-phosphosulfate + [thioredoxin]-dithiol. It participates in sulfur metabolism; hydrogen sulfide biosynthesis; sulfite from sulfate. Functionally, catalyzes the formation of sulfite from adenosine 5'-phosphosulfate (APS) using thioredoxin as an electron donor. This chain is Adenosine 5'-phosphosulfate reductase, found in Bacillus cytotoxicus (strain DSM 22905 / CIP 110041 / 391-98 / NVH 391-98).